The primary structure comprises 180 residues: Large ribosomal subunit protein uL6 (180 aa).

This sequence belongs to the universal ribosomal protein uL6 family. As to quaternary structure, part of the 50S ribosomal subunit.

Its function is as follows. This protein binds to the 23S rRNA, and is important in its secondary structure. It is located near the subunit interface in the base of the L7/L12 stalk, and near the tRNA binding site of the peptidyltransferase center. This is Large ribosomal subunit protein uL6 from Cutibacterium acnes (strain DSM 16379 / KPA171202) (Propionibacterium acnes).